The following is a 355-amino-acid chain: Probable aldo-keto reductase 3 (355 aa).

Residue Tyr-70 is the Proton donor of the active site. Substrate is bound at residue His-138. 217-227 is an NADP(+) binding site; the sequence is SPLGRGFFSSG.

Belongs to the aldo/keto reductase family.

This Oryza sativa subsp. indica (Rice) protein is Probable aldo-keto reductase 3.